We begin with the raw amino-acid sequence, 148 residues long: Probable glycine cleavage system H protein 2 (148 aa).

One can recognise a Lipoyl-binding domain in the interval 32–114 (TIVVGITDLA…YGKGWLVKMK (83 aa)). Lys-73 is modified (N6-lipoyllysine).

It belongs to the GcvH family. The glycine cleavage system is composed of four proteins: P, T, L and H. (R)-lipoate serves as cofactor.

Its function is as follows. The glycine cleavage system catalyzes the degradation of glycine. The H protein shuttles the methylamine group of glycine from the P protein to the T protein. This chain is Probable glycine cleavage system H protein 2, found in Saccharolobus solfataricus (strain ATCC 35092 / DSM 1617 / JCM 11322 / P2) (Sulfolobus solfataricus).